Here is a 371-residue protein sequence, read N- to C-terminus: MSTSSSTARTYRITALAGDGIGPEIMRVGRAVLDAVARQMGFALQWQEGLIGGAAYDQTGDPLPAETLKMAQESDAVYLAAVGDFKYDALPPEKRPERALLGLRAGLGLFANLRPVKVFPQLVGASSLKPEVIAGIDLVVVRELTGGIYFGQPKGIFTDAQGSRRGVNTMVYSEAEVDRIARVAFELARKRRRKLCSVDKANVLEVSQLWRERVNAIAAEYPEVELSHLYIDNAAMQLVRWPKQFDVILTGNLFGDILSDEAAMLTGSIGMLPSASLGSSGPGLYEPVHGSAPDIAGQDKANPIAQVLSGALMLRYSLDQPQAADRIEQAVEAVLAQGYRTPDLYSEGMTLVGCQEMGEKLVAALSQQQAQ.

The substrate site is built by R104, R114, R142, and D232. Residues D232, D256, and D260 each contribute to the Mg(2+) site. An NAD(+)-binding site is contributed by 290–302; the sequence is GSAPDIAGQDKAN.

It belongs to the isocitrate and isopropylmalate dehydrogenases family. LeuB type 1 subfamily. As to quaternary structure, homodimer. Mg(2+) serves as cofactor. Requires Mn(2+) as cofactor.

Its subcellular location is the cytoplasm. The enzyme catalyses (2R,3S)-3-isopropylmalate + NAD(+) = 4-methyl-2-oxopentanoate + CO2 + NADH. Its pathway is amino-acid biosynthesis; L-leucine biosynthesis; L-leucine from 3-methyl-2-oxobutanoate: step 3/4. In terms of biological role, catalyzes the oxidation of 3-carboxy-2-hydroxy-4-methylpentanoate (3-isopropylmalate) to 3-carboxy-4-methyl-2-oxopentanoate. The product decarboxylates to 4-methyl-2 oxopentanoate. The chain is 3-isopropylmalate dehydrogenase from Synechococcus sp. (strain JA-2-3B'a(2-13)) (Cyanobacteria bacterium Yellowstone B-Prime).